We begin with the raw amino-acid sequence, 794 residues long: Putative neurotrophin receptor LTRK 1 (794 aa).

The N-terminal stretch at Met-1 to Pro-33 is a signal peptide. Over Leu-34–Gln-419 the chain is Extracellular. A disordered region spans residues Gln-36–Asn-102. 3 N-linked (GlcNAc...) asparagine glycosylation sites follow: Asn-64, Asn-102, and Asn-128. LRR repeat units follow at residues Cys-181–Thr-202 and Ser-205–Thr-226. The region spanning Asn-237–Pro-280 is the LRRCT domain. Residues Asn-288 and Asn-374 are each glycosylated (N-linked (GlcNAc...) asparagine). Residues Val-420–Leu-440 traverse the membrane as a helical segment. Topologically, residues Cys-441–Ala-794 are cytoplasmic. Residues Ile-504–Ile-775 form the Protein kinase domain. ATP-binding positions include Ile-510 to Val-518 and Lys-538. Asp-647 serves as the catalytic Proton acceptor. A phosphotyrosine; by autocatalysis mark is found at Tyr-673, Tyr-677, Tyr-678, and Tyr-789.

It belongs to the protein kinase superfamily. Tyr protein kinase family. Insulin receptor subfamily. Expression is confined to the central nervous system and its associated endocrine tissues.

The protein resides in the membrane. It carries out the reaction L-tyrosyl-[protein] + ATP = O-phospho-L-tyrosyl-[protein] + ADP + H(+). In terms of biological role, may bind an endogenous invertebrate neurotrophin. Binds human NT-3, but not NGF or BDNF. This Lymnaea stagnalis (Great pond snail) protein is Putative neurotrophin receptor LTRK 1.